Consider the following 778-residue polypeptide: Probable glutamine--tRNA ligase (778 aa).

Basic and acidic residues predominate over residues 188-205 (LKPQTKANDKPKAAKPKA). A disordered region spans residues 188–219 (LKPQTKANDKPKAAKPKAEVTPAAQTAEAASD). The 'HIGH' region motif lies at 273–283 (PEPNGILHIGH). Residues 274 to 276 (EPN) and 280 to 286 (HIGHAKA) each bind ATP. Residues D306 and Y441 each coordinate L-glutamine. ATP-binding positions include T460, 489–490 (RL), and 497–499 (VSK). The 'KMSKS' region signature appears at 496–500 (LVSKR).

Belongs to the class-I aminoacyl-tRNA synthetase family.

It carries out the reaction tRNA(Gln) + L-glutamine + ATP = L-glutaminyl-tRNA(Gln) + AMP + diphosphate. The sequence is that of Probable glutamine--tRNA ligase from Drosophila melanogaster (Fruit fly).